The following is a 215-amino-acid chain: MNLLIMGLPGAGKGTQAEFIVKNYGVNHISTGDMFRAAMKNETEMGKLAKSFIDKGELVPDEVTNGIVKERLAQDDIKASGFLLDGYPRTIDQAHALDTMLEELGIKLDAVVNIVVNPDILVDRLSGRYICRNCGATYHKIFNPTKVEGVCDVCGSHDLYQRADDVPETVKNRLDVNIKESAPIIEHYTELGLVKNIEGEQEISQVTEDIKKVLG.

Glycine 10 to threonine 15 contributes to the ATP binding site. Positions serine 30–valine 59 are NMP. Residues threonine 31, arginine 36, glutamate 57 to valine 59, glycine 86 to arginine 89, and glutamine 93 contribute to the AMP site. The LID stretch occupies residues glycine 127–aspartate 165. Arginine 128 serves as a coordination point for ATP. The Zn(2+) site is built by cysteine 131 and cysteine 134. ATP is bound at residue threonine 137–tyrosine 138. Residues cysteine 151 and cysteine 154 each contribute to the Zn(2+) site. Arginine 162 and arginine 173 together coordinate AMP. An ATP-binding site is contributed by glutamine 201.

This sequence belongs to the adenylate kinase family. As to quaternary structure, monomer.

The protein localises to the cytoplasm. The enzyme catalyses AMP + ATP = 2 ADP. It participates in purine metabolism; AMP biosynthesis via salvage pathway; AMP from ADP: step 1/1. Functionally, catalyzes the reversible transfer of the terminal phosphate group between ATP and AMP. Plays an important role in cellular energy homeostasis and in adenine nucleotide metabolism. In Lactococcus lactis subsp. lactis (strain IL1403) (Streptococcus lactis), this protein is Adenylate kinase.